A 181-amino-acid polypeptide reads, in one-letter code: Large ribosomal subunit protein uL5 (181 aa).

Belongs to the universal ribosomal protein uL5 family. Part of the 50S ribosomal subunit; contacts the 5S rRNA and probably tRNA. Forms a bridge to the 30S subunit in the 70S ribosome.

In terms of biological role, this is one of the proteins that bind and probably mediate the attachment of the 5S RNA into the large ribosomal subunit, where it forms part of the central protuberance. In the 70S ribosome it contacts protein S13 of the 30S subunit (bridge B1b), connecting the 2 subunits; this bridge is implicated in subunit movement. May contact the P site tRNA; the 5S rRNA and some of its associated proteins might help stabilize positioning of ribosome-bound tRNAs. The chain is Large ribosomal subunit protein uL5 from Methanococcus maripaludis (strain C5 / ATCC BAA-1333).